A 301-amino-acid chain; its full sequence is Probable aspartoacylase (301 aa).

Zn(2+) is bound by residues His-13 and Glu-16. Substrate is bound by residues Arg-54 and 61–62 (NR). A Zn(2+)-binding site is contributed by His-105. Substrate-binding residues include Glu-163 and Tyr-273.

It belongs to the AspA/AstE family. Aspartoacylase subfamily. Requires Zn(2+) as cofactor.

It catalyses the reaction an N-acyl-L-aspartate + H2O = a carboxylate + L-aspartate. The sequence is that of Probable aspartoacylase from Prochlorococcus marinus (strain MIT 9312).